The following is a 336-amino-acid chain: Probable allantoicase (336 aa).

This sequence belongs to the allantoicase family.

It carries out the reaction allantoate + H2O = (S)-ureidoglycolate + urea. Its pathway is nitrogen metabolism; (S)-allantoin degradation; (S)-ureidoglycolate from allantoate (aminidohydrolase route): step 1/1. The protein is Probable allantoicase of Acinetobacter baumannii (strain SDF).